A 193-amino-acid polypeptide reads, in one-letter code: Probable GTP-binding protein EngB (193 aa).

Residues 22-193 (MYPEISFIGR…ELWQIIEDLL (172 aa)) form the EngB-type G domain. Residues 30–37 (GRSNVGKS), 57–61 (GKTRT), 75–78 (DLPG), 142–145 (TKMD), and 174–176 (FSS) each bind GTP. Residues S37 and T59 each contribute to the Mg(2+) site.

The protein belongs to the TRAFAC class TrmE-Era-EngA-EngB-Septin-like GTPase superfamily. EngB GTPase family. It depends on Mg(2+) as a cofactor.

Its function is as follows. Necessary for normal cell division and for the maintenance of normal septation. This Natranaerobius thermophilus (strain ATCC BAA-1301 / DSM 18059 / JW/NM-WN-LF) protein is Probable GTP-binding protein EngB.